The following is a 216-amino-acid chain: Flagellar transcriptional regulator FlhC (216 aa).

The Zn(2+) site is built by cysteine 137, cysteine 140, cysteine 157, and cysteine 160.

This sequence belongs to the FlhC family. In terms of assembly, heterohexamer composed of two FlhC and four FlhD subunits. Each FlhC binds a FlhD dimer, forming a heterotrimer, and a hexamer assembles by dimerization of two heterotrimers. Requires Zn(2+) as cofactor.

Its subcellular location is the cytoplasm. Functions in complex with FlhD as a master transcriptional regulator that regulates transcription of several flagellar and non-flagellar operons by binding to their promoter region. Activates expression of class 2 flagellar genes, including fliA, which is a flagellum-specific sigma factor that turns on the class 3 genes. Also regulates genes whose products function in a variety of physiological pathways. The polypeptide is Flagellar transcriptional regulator FlhC (Paraburkholderia atlantica).